The following is a 315-amino-acid chain: BTB/POZ domain-containing adapter for CUL3-mediated RhoA degradation protein 3 (315 aa).

Position 1 is an N-acetylmethionine (methionine 1). Phosphoserine is present on serine 23. Residues 32–100 (KYVKLNVGGA…LRDGAVPLPE (69 aa)) form the BTB domain. An Interaction with PCNA motif is present at residues 239–245 (QTKVEFP). The interval 269 to 294 (NALLEATGGAAGRSHHLDEDEERERE) is disordered.

The protein belongs to the BACURD family. In terms of assembly, homotetramer; forms a two-fold symmetric tetramer in solution. Interacts with CUL3; interaction is direct and forms a 5:5 heterodecamer. Component of the BCR(BACURD3) E3 ubiquitin ligase complex, at least composed of CUL3, KCTD10/BACURD3 and RBX1. Interacts with DNA polymerase delta subunit 2/POLD2. Interacts with PCNA. In terms of tissue distribution, expressed at highest levels in lung. Also detected in testis and heart. Very low expression, if any, in brain, liver, spleen, kidney and skeletal muscle.

It is found in the nucleus. It functions in the pathway protein modification; protein ubiquitination. In terms of biological role, substrate-specific adapter of a BCR (BTB-CUL3-RBX1) E3 ubiquitin-protein ligase complex. The BCR(BACURD3) E3 ubiquitin ligase complex mediates the ubiquitination of target proteins, leading to their degradation by the proteasome. This is BTB/POZ domain-containing adapter for CUL3-mediated RhoA degradation protein 3 (Kctd10) from Rattus norvegicus (Rat).